A 397-amino-acid chain; its full sequence is Argininosuccinate synthase (397 aa).

ATP is bound at residue Ala8–Ser16. 2 residues coordinate L-citrulline: Tyr86 and Ser91. Gly116 is an ATP binding site. Residues Thr118, Asn122, and Asp123 each coordinate L-aspartate. An L-citrulline-binding site is contributed by Asn122. 5 residues coordinate L-citrulline: Arg126, Ser175, Ser184, Glu260, and Tyr272.

This sequence belongs to the argininosuccinate synthase family. Type 1 subfamily. Homotetramer.

Its subcellular location is the cytoplasm. It catalyses the reaction L-citrulline + L-aspartate + ATP = 2-(N(omega)-L-arginino)succinate + AMP + diphosphate + H(+). Its pathway is amino-acid biosynthesis; L-arginine biosynthesis; L-arginine from L-ornithine and carbamoyl phosphate: step 2/3. The chain is Argininosuccinate synthase from Clostridium botulinum (strain Kyoto / Type A2).